A 341-amino-acid polypeptide reads, in one-letter code: Dual oxidase maturation factor 1 (341 aa).

The Extracellular segment spans residues 1 to 24; that stretch reads MAALGHTLPFYTGTKPTFPMDTTL. A helical membrane pass occupies residues 25–45; sequence AVIITIFLTALVTFIIILPGI. Residues 46–51 are Cytoplasmic-facing; the sequence is RGKTRL. Residues 52–72 traverse the membrane as a helical segment; that stretch reads FWLLRVVTSLFIGAVILAVNF. Residues 73 to 183 are Extracellular-facing; the sequence is SSEWSVGHVN…RLAGHYASAM (111 aa). N84, N109, and N121 each carry an N-linked (GlcNAc...) asparagine glycan. Residues 184 to 204 traverse the membrane as a helical segment; it reads LWVAFLCWLLANVMLSMPVLV. Position 205 (Y205) is a topological domain, cytoplasmic. Residues 206–226 form a helical membrane-spanning segment; that stretch reads GGHMLLATGLFQLLALFFFSM. Over 227 to 249 the chain is Extracellular; that stretch reads TTSLISPCPLRLGTAVLHTHHGP. A helical transmembrane segment spans residues 250 to 270; sequence AFWITLATGLLCILLGLVMAV. At 271–341 the chain is on the cytoplasmic side; the sequence is AHRMQPHRLK…EHPKESDCSL (71 aa).

The protein belongs to the DUOXA family. In terms of assembly, may interact with NUMB.

It localises to the membrane. Its function is as follows. May be required for the maturation and the transport from the endoplasmic reticulum to the plasma membrane of functional DUOX1. The chain is Dual oxidase maturation factor 1 (Duoxa1) from Mus musculus (Mouse).